Here is an 856-residue protein sequence, read N- to C-terminus: Translation initiation factor IF-2 (856 aa).

One can recognise a tr-type G domain in the interval 356 to 526 (PRAPVVTVMG…LLIADLLELK (171 aa)). Residues 365-372 (GHVDHGKT) form a G1 region. 365-372 (GHVDHGKT) lines the GTP pocket. The G2 stretch occupies residues 390–394 (GITQH). The interval 412–415 (DTPG) is G3. GTP contacts are provided by residues 412 to 416 (DTPGH) and 466 to 469 (NKID). The segment at 466–469 (NKID) is G4. The segment at 502 to 504 (SAK) is G5.

This sequence belongs to the TRAFAC class translation factor GTPase superfamily. Classic translation factor GTPase family. IF-2 subfamily.

It is found in the cytoplasm. Its function is as follows. One of the essential components for the initiation of protein synthesis. Protects formylmethionyl-tRNA from spontaneous hydrolysis and promotes its binding to the 30S ribosomal subunits. Also involved in the hydrolysis of GTP during the formation of the 70S ribosomal complex. The polypeptide is Translation initiation factor IF-2 (Ehrlichia ruminantium (strain Gardel)).